Consider the following 1013-residue polypeptide: Chitin synthase A (1013 aa).

N10 carries an N-linked (GlcNAc...) asparagine glycan. Disordered stretches follow at residues 26–83 (RYSY…AADW) and 95–218 (ERAD…RRGV). Over residues 64-81 (TASRPASPARPWSPTRAA) the composition is skewed to low complexity. Over residues 154-173 (TISSRHGPQGSVQSFTSEST) the composition is skewed to polar residues. N194 and N316 each carry an N-linked (GlcNAc...) asparagine glycan. 5 consecutive transmembrane segments (helical) span residues 646 to 666 (LLQL…FFFI), 686 to 706 (IFIV…IFSM), 721 to 741 (MIVY…LIVL), 759 to 779 (LFVN…FTSF), and 792 to 811 (AQYF…YAFC). Residue N837 is glycosylated (N-linked (GlcNAc...) asparagine). A run of 2 helical transmembrane segments spans residues 892-912 (VSVW…VYGV) and 919-939 (VYLA…AIGS). 4 N-linked (GlcNAc...) asparagine glycosylation sites follow: N967, N980, N989, and N995.

It belongs to the chitin synthase family. Class II subfamily. Mainly expressed in the metulae, phialides, and conidia.

Its subcellular location is the cell membrane. The protein localises to the cell septum. It carries out the reaction [(1-&gt;4)-N-acetyl-beta-D-glucosaminyl](n) + UDP-N-acetyl-alpha-D-glucosamine = [(1-&gt;4)-N-acetyl-beta-D-glucosaminyl](n+1) + UDP + H(+). Functionally, polymerizes chitin, a structural polymer of the cell wall and septum, by transferring the sugar moiety of UDP-GlcNAc to the non-reducing end of the growing chitin polymer. Seems not to be involved in hyphal growth, but, with chsC, chsA shares critical functions in hyphal wall integrity and differentiation. ChsA and chsC share also overlapping roles in septum formation. Invoved in the production of the asexual spores (conidia) that are formed by differentiated aerial hyphae called conidiophores. The protein is Chitin synthase A of Emericella nidulans (strain FGSC A4 / ATCC 38163 / CBS 112.46 / NRRL 194 / M139) (Aspergillus nidulans).